A 158-amino-acid chain; its full sequence is 6,7-dimethyl-8-ribityllumazine synthase (158 aa).

Residues F22, 57 to 59 (AYE), and 81 to 83 (AVI) each bind 5-amino-6-(D-ribitylamino)uracil. 86 to 87 (GT) provides a ligand contact to (2S)-2-hydroxy-3-oxobutyl phosphate. The active-site Proton donor is H89. Residue F114 coordinates 5-amino-6-(D-ribitylamino)uracil. A (2S)-2-hydroxy-3-oxobutyl phosphate-binding site is contributed by R128.

The protein belongs to the DMRL synthase family. Forms an icosahedral capsid composed of 60 subunits, arranged as a dodecamer of pentamers.

It catalyses the reaction (2S)-2-hydroxy-3-oxobutyl phosphate + 5-amino-6-(D-ribitylamino)uracil = 6,7-dimethyl-8-(1-D-ribityl)lumazine + phosphate + 2 H2O + H(+). Its pathway is cofactor biosynthesis; riboflavin biosynthesis; riboflavin from 2-hydroxy-3-oxobutyl phosphate and 5-amino-6-(D-ribitylamino)uracil: step 1/2. Its function is as follows. Catalyzes the formation of 6,7-dimethyl-8-ribityllumazine by condensation of 5-amino-6-(D-ribitylamino)uracil with 3,4-dihydroxy-2-butanone 4-phosphate. This is the penultimate step in the biosynthesis of riboflavin. In Pseudoalteromonas atlantica (strain T6c / ATCC BAA-1087), this protein is 6,7-dimethyl-8-ribityllumazine synthase.